The primary structure comprises 215 residues: Ribonuclease T (215 aa).

The region spanning 20–194 (VVIDVETAGF…YDTLQTAKLF (175 aa)) is the Exonuclease domain. Aspartate 23, glutamate 25, histidine 181, and aspartate 186 together coordinate Mg(2+). The active-site Proton donor/acceptor is the histidine 181.

It belongs to the RNase T family. As to quaternary structure, homodimer. Mg(2+) serves as cofactor.

Trims short 3' overhangs of a variety of RNA species, leaving a one or two nucleotide 3' overhang. Responsible for the end-turnover of tRNA: specifically removes the terminal AMP residue from uncharged tRNA (tRNA-C-C-A). Also appears to be involved in tRNA biosynthesis. This chain is Ribonuclease T, found in Yersinia pestis.